We begin with the raw amino-acid sequence, 544 residues long: Chaperonin GroEL (544 aa).

ATP contacts are provided by residues 29-32, 86-90, Gly-413, 478-480, and Asp-494; these read TIGP, DGTTT, and NAA.

Belongs to the chaperonin (HSP60) family. In terms of assembly, forms a cylinder of 14 subunits composed of two heptameric rings stacked back-to-back. Interacts with the co-chaperonin GroES.

The protein localises to the cytoplasm. It catalyses the reaction ATP + H2O + a folded polypeptide = ADP + phosphate + an unfolded polypeptide.. Its function is as follows. Together with its co-chaperonin GroES, plays an essential role in assisting protein folding. The GroEL-GroES system forms a nano-cage that allows encapsulation of the non-native substrate proteins and provides a physical environment optimized to promote and accelerate protein folding. The protein is Chaperonin GroEL of Exiguobacterium sp. (strain ATCC BAA-1283 / AT1b).